Consider the following 919-residue polypeptide: MGLFRGFVFLLVLCLLHQSNTSFIKLNNNGFEDIVIVIDPSVPEDEKIIEQIEDMVTTASTYLFEATEKRFFFKNVSILIPENWKENPQYKRPKHENHKHADVIVAPPTLPGRDEPYTKQFTECGEKGEYIHFTPDLLLGKKQNEYGPPGKLFVHEWAHLRWGVFDEYNEDQPFYRAKSKKIEATRCSAGISGRNRVYKCQGGSCLSRACRIDSTTKLYGKDCQFFPDKVQTEKASIMFMQSIDSVVEFCNEKTHNQEAPSLQNIKCNFRSTWEVISNSEDFKNTIPMVTPPPPPVFSLLKISQRIVCLVLDKSGSMGGKDRLNRMNQAAKHFLLQTVENGSWVGMVHFDSTATIVNKLIQIKSSDERNTLMAGLPTYPLGGTSICSGIKYAFQVIGELHSQLDGSEVLLLTDGEDNTASSCIDEVKQSGAIVHFIALGRAADEAVIEMSKITGGSHFYVSDEAQNNGLIDAFGALTSGNTDLSQKSLQLESKGLTLNSNAWMNDTVIIDSTVGKDTFFLITWNSLPPSISLWDPSGTIMENFTVDATSKMAYLSIPGTAKVGTWAYNLQAKANPETLTITVTSRAANSSVPPITVNAKMNKDVNSFPSPMIVYAEILQGYVPVLGANVTAFIESQNGHTEVLELLDNGAGADSFKNDGVYSRYFTAYTENGRYSLKVRAHGGANTARLKLRPPLNRAAYIPGWVVNGEIEANPPRPEIDEDTQTTLEDFSRTASGGAFVVSQVPSLPLPDQYPPSQITDLDATVHEDKIILTWTAPGDNFDVGKVQRYIIRISASILDLRDSFDDALQVNTTDLSPKEANSKESFAFKPENISEENATHIFIAIKSIDKSNLTSKVSNIAQVTLFIPQANPDDIDPTPTPTPTPTPDKSHNSGVNISTLVLSVIGSVVIVNFILSTTI.

An N-terminal signal peptide occupies residues 1–21; sequence MGLFRGFVFLLVLCLLHQSNT. Residues 45–199 are metalloprotease domain; it reads DEKIIEQIED…GISGRNRVYK (155 aa). The N-linked (GlcNAc...) asparagine glycan is linked to Asn-75. His-155 is a Zn(2+) binding site. Glu-156 is a catalytic residue. Positions 159 and 166 each coordinate Zn(2+). The 171-residue stretch at 306–476 folds into the VWFA domain; the sequence is IVCLVLDKSG…NGLIDAFGAL (171 aa). 9 N-linked (GlcNAc...) asparagine glycosylation sites follow: Asn-340, Asn-504, Asn-542, Asn-588, Asn-628, Asn-811, Asn-832, Asn-837, and Asn-852. Residues 870–893 form a disordered region; it reads ANPDDIDPTPTPTPTPTPDKSHNS. The helical transmembrane segment at 895–915 threads the bilayer; that stretch reads VNISTLVLSVIGSVVIVNFIL.

This sequence belongs to the CLCR family. The translation product is autoproteolytically cleaved by the metalloprotease domain in the endoplasmic reticulum into a N-terminal and a C-terminal products that remain physically associated with each other. The cleavage is necessary for calcium-activated chloride channel (CaCC) activation activity. Primarily expressed in the digestive tract, mainly in colon. Detected in smaller amounts in brain, urogenital organs, testis, and salivary and mammary glands. Highly expressed in the epithelial layer and submucosal gland of the inferior turbinate mucosa. Lower levels in the epithelial layer of nasal polyp.

The protein localises to the cell membrane. It is found in the apical cell membrane. Its subcellular location is the secreted. Its function is as follows. May be involved in mediating calcium-activated chloride conductance. This Homo sapiens (Human) protein is Calcium-activated chloride channel regulator 4 (CLCA4).